Here is a 142-residue protein sequence, read N- to C-terminus: Large ribosomal subunit protein uL13 (142 aa).

Belongs to the universal ribosomal protein uL13 family. In terms of assembly, part of the 50S ribosomal subunit.

Its function is as follows. This protein is one of the early assembly proteins of the 50S ribosomal subunit, although it is not seen to bind rRNA by itself. It is important during the early stages of 50S assembly. The protein is Large ribosomal subunit protein uL13 of Pseudomonas fluorescens (strain Pf0-1).